Consider the following 419-residue polypeptide: CCA-adding enzyme (419 aa).

Positions 8 and 11 each coordinate ATP. Gly-8 and Arg-11 together coordinate CTP. Mg(2+)-binding residues include Asp-21 and Asp-23. Positions 91, 137, and 140 each coordinate ATP. CTP-binding residues include Arg-91, Arg-137, and Arg-140.

The protein belongs to the tRNA nucleotidyltransferase/poly(A) polymerase family. Bacterial CCA-adding enzyme type 2 subfamily. It depends on Mg(2+) as a cofactor.

The catalysed reaction is a tRNA precursor + 2 CTP + ATP = a tRNA with a 3' CCA end + 3 diphosphate. It catalyses the reaction a tRNA with a 3' CCA end + 2 CTP + ATP = a tRNA with a 3' CCACCA end + 3 diphosphate. Its function is as follows. Catalyzes the addition and repair of the essential 3'-terminal CCA sequence in tRNAs without using a nucleic acid template. Adds these three nucleotides in the order of C, C, and A to the tRNA nucleotide-73, using CTP and ATP as substrates and producing inorganic pyrophosphate. tRNA 3'-terminal CCA addition is required both for tRNA processing and repair. Also involved in tRNA surveillance by mediating tandem CCA addition to generate a CCACCA at the 3' terminus of unstable tRNAs. While stable tRNAs receive only 3'-terminal CCA, unstable tRNAs are marked with CCACCA and rapidly degraded. In Buchnera aphidicola subsp. Baizongia pistaciae (strain Bp), this protein is CCA-adding enzyme.